The sequence spans 446 residues: tRNA-2-methylthio-N(6)-dimethylallyladenosine synthase (446 aa).

The MTTase N-terminal domain maps to 2–122; it reads KKAYVKSYGC…LPDLLRQSRE (121 aa). Cys11, Cys47, Cys85, Cys157, Cys161, and Cys164 together coordinate [4Fe-4S] cluster. Residues 143–375 enclose the Radical SAM core domain; that stretch reads RNRGVTGFLT…QQLLDQQRHA (233 aa). The 63-residue stretch at 378 to 440 folds into the TRAM domain; sequence AAAVGTVAEI…SNSLFGEVLE (63 aa).

Belongs to the methylthiotransferase family. MiaB subfamily. In terms of assembly, monomer. The cofactor is [4Fe-4S] cluster.

The protein localises to the cytoplasm. The enzyme catalyses N(6)-dimethylallyladenosine(37) in tRNA + (sulfur carrier)-SH + AH2 + 2 S-adenosyl-L-methionine = 2-methylsulfanyl-N(6)-dimethylallyladenosine(37) in tRNA + (sulfur carrier)-H + 5'-deoxyadenosine + L-methionine + A + S-adenosyl-L-homocysteine + 2 H(+). Functionally, catalyzes the methylthiolation of N6-(dimethylallyl)adenosine (i(6)A), leading to the formation of 2-methylthio-N6-(dimethylallyl)adenosine (ms(2)i(6)A) at position 37 in tRNAs that read codons beginning with uridine. The sequence is that of tRNA-2-methylthio-N(6)-dimethylallyladenosine synthase from Methylorubrum populi (strain ATCC BAA-705 / NCIMB 13946 / BJ001) (Methylobacterium populi).